A 1022-amino-acid polypeptide reads, in one-letter code: rDNA transcriptional regulator POL5 (1022 aa).

Composition is skewed to acidic residues over residues 706–719 (EEFE…DASE), 728–748 (SESE…EDEA), and 781–802 (DLDQ…ESMD). Disordered regions lie at residues 706-748 (EEFE…EDEA) and 778-805 (GEVD…DDEK). Ser-789 is modified (phosphoserine).

Belongs to the MYBBP1A family. As to quaternary structure, interacts with FRK1.

It localises to the nucleus. The protein localises to the nucleolus. The catalysed reaction is DNA(n) + a 2'-deoxyribonucleoside 5'-triphosphate = DNA(n+1) + diphosphate. Its activity is regulated as follows. Stimulated by PCNA and inhibited by aphidicolin. Functionally, plays an important role in the regulation of rRNA transcription. Binds near or at the enhancer region of rRNA repeating units. May have DNA polymerase activity, but it is not required for in vivo function. The chain is rDNA transcriptional regulator POL5 from Saccharomyces cerevisiae (strain ATCC 204508 / S288c) (Baker's yeast).